An 85-amino-acid chain; its full sequence is U4-theraphotoxin-Hhn1a (85 aa).

The N-terminal stretch at M1–A22 is a signal peptide. The propeptide occupies E23–R48. Cystine bridges form between C52/C66, C56/C77, and C71/C82.

This sequence belongs to the neurotoxin 12 (Hwtx-2) family. 02 (Hwtx-2) subfamily. In terms of assembly, monomer. Expressed by the venom gland.

The protein resides in the secreted. Its function is as follows. Neurotoxin active on both insects and mammals. This Cyriopagopus hainanus (Chinese bird spider) protein is U4-theraphotoxin-Hhn1a.